The chain runs to 116 residues: MRHQLRIPLLSKPADQRKALLRGLTTQLIREGRVTTTKARAKALRNETERMISLAKEGTLAARRRAIGYIYDKKLVHSLFEKAQERYGDRNGGYTRIVRTVARKGDNAQMAIIELV.

The protein belongs to the bacterial ribosomal protein bL17 family. Part of the 50S ribosomal subunit. Contacts protein L32.

This Prochlorococcus marinus (strain MIT 9515) protein is Large ribosomal subunit protein bL17.